A 443-amino-acid polypeptide reads, in one-letter code: Protein UIP5 (443 aa).

Residues 1–27 form the signal peptide; it reads MSRDVRAEKLAISLLILSLFLIFQLVA. Residues 28-398 are Perinuclear space-facing; that stretch reads EIYLNNGDQY…LFKVVLTIWH (371 aa). The helical transmembrane segment at 399-420 threads the bilayer; sequence YSEILLLIMGIYLFSACIRVFQ. Residues 421-443 lie on the Cytoplasmic side of the membrane; the sequence is RRFKKIRSRRKRAGSHSVGLLPM.

The protein localises to the nucleus membrane. The chain is Protein UIP5 (UIP5) from Saccharomyces cerevisiae (strain ATCC 204508 / S288c) (Baker's yeast).